A 217-amino-acid chain; its full sequence is Probable GTP-binding protein EngB (217 aa).

The EngB-type G domain occupies 27–201 (GGVEIAFAGR…AQTLSGWYLA (175 aa)). GTP is bound by residues 35–42 (GRSNAGKS), 62–66 (GRTQL), 80–83 (DLPG), 147–150 (TKAD), and 180–182 (FSS). 2 residues coordinate Mg(2+): S42 and T64.

Belongs to the TRAFAC class TrmE-Era-EngA-EngB-Septin-like GTPase superfamily. EngB GTPase family. Requires Mg(2+) as cofactor.

Its function is as follows. Necessary for normal cell division and for the maintenance of normal septation. The polypeptide is Probable GTP-binding protein EngB (Aeromonas salmonicida (strain A449)).